A 154-amino-acid polypeptide reads, in one-letter code: Aspartate carbamoyltransferase regulatory chain (154 aa).

Zn(2+)-binding residues include C109, C114, C138, and C141.

Belongs to the PyrI family. Contains catalytic and regulatory chains. Requires Zn(2+) as cofactor.

In terms of biological role, involved in allosteric regulation of aspartate carbamoyltransferase. In Methanothrix thermoacetophila (strain DSM 6194 / JCM 14653 / NBRC 101360 / PT) (Methanosaeta thermophila), this protein is Aspartate carbamoyltransferase regulatory chain.